A 626-amino-acid polypeptide reads, in one-letter code: DNA mismatch repair protein MutL (626 aa).

This sequence belongs to the DNA mismatch repair MutL/HexB family.

Its function is as follows. This protein is involved in the repair of mismatches in DNA. It is required for dam-dependent methyl-directed DNA mismatch repair. May act as a 'molecular matchmaker', a protein that promotes the formation of a stable complex between two or more DNA-binding proteins in an ATP-dependent manner without itself being part of a final effector complex. In Chlorobium luteolum (strain DSM 273 / BCRC 81028 / 2530) (Pelodictyon luteolum), this protein is DNA mismatch repair protein MutL.